Reading from the N-terminus, the 230-residue chain is Protein-L-isoaspartate O-methyltransferase (230 aa).

Residue S65 is part of the active site.

It belongs to the methyltransferase superfamily. L-isoaspartyl/D-aspartyl protein methyltransferase family. In terms of assembly, monomer. As to expression, highest contents in seeds.

It is found in the cytoplasm. It catalyses the reaction [protein]-L-isoaspartate + S-adenosyl-L-methionine = [protein]-L-isoaspartate alpha-methyl ester + S-adenosyl-L-homocysteine. Catalyzes the methyl esterification of L-isoaspartyl residues in peptides and proteins that result from spontaneous decomposition of normal L-aspartyl and L-asparaginyl residues. It plays a role in the repair and/or degradation of damaged proteins. This enzyme does not act on D-aspartyl residues. This chain is Protein-L-isoaspartate O-methyltransferase (PCM), found in Triticum aestivum (Wheat).